The sequence spans 202 residues: Protein FAR-RED ELONGATED HYPOCOTYL 1 (202 aa).

At S39 the chain carries Phosphoserine. The Nuclear localization sequence (NLS) motif lies at 40-43; it reads KKRK. A Nuclear export sequence (NES) motif is present at residues 54-57; the sequence is LLPL. T61 bears the Phosphothreonine mark.

It belongs to the FHY1 protein family. In terms of assembly, homodimer and heterodimer with FHL. Interacts with underphosphorylated PHYA, especially upon far-red (FR) light illumination. Binds to LAF1 and HFR1. Forms PHYA/FHY1/HFR1 complex in darkness but dissociates from PHYA and HFR1 in response to continuous FR light (FRc). Post-translationally, inactivated by rapid reversible PHYA-mediated phosphorylation at Ser-39 and Thr-61 in red light (R), thus inhibiting PHYA signaling in a negative feedback loop; this ensures the seedling deetiolation process in response to a R-enriched light condition. Subsequent exposure to far-red light (FR) after the R conditions leads to dephosphorylation. The phosphorylated form is cytoplasmic only and unable to bind to chromatin at direct target genes whereas the unphosphorylated form can shuttle from cytoplasm to nucleus. As to expression, expressed in hypocotyl cells of etiolated plants.

The protein localises to the nucleus. The protein resides in the cytoplasm. Key regulator of far red / red (FR/R) spectrum-specific responses essential for the adaption to changing light conditions (e.g. de-etiolation), essentially by regulating PHYA shuttling from the cytoplasm to the nucleus and by directly regulating the expression of some target genes, depending on light conditions and phosphorylation status. Binds chromatin at target genes promoters, especially in FR light conditions. Can activate transcription of different genes, some being in a phytochrome A (PHYA)-dependent and other in a PHYA-independent manners. Controls specific aspects of plant development, such as the inhibition of seed germination under FR during salt stress. Essential for light-regulated PHYA nuclear accumulation and subsequent PHYA phototropic signaling processes involved in photomorphogenesis. Mediates the association of PHYA with HFR1 and LAF1 in the nucleus in response to FR conditions. PHYA-specific signal transducer in response to continuous FR lights. Contributes to inhibition of hypocotyl elongation in continuous blue light (B). The chain is Protein FAR-RED ELONGATED HYPOCOTYL 1 from Arabidopsis thaliana (Mouse-ear cress).